Here is a 154-residue protein sequence, read N- to C-terminus: SsrA-binding protein (154 aa).

A disordered region spans residues 134-154 (DKREDIKKRDQERELSRRFKN).

Belongs to the SmpB family.

It is found in the cytoplasm. In terms of biological role, required for rescue of stalled ribosomes mediated by trans-translation. Binds to transfer-messenger RNA (tmRNA), required for stable association of tmRNA with ribosomes. tmRNA and SmpB together mimic tRNA shape, replacing the anticodon stem-loop with SmpB. tmRNA is encoded by the ssrA gene; the 2 termini fold to resemble tRNA(Ala) and it encodes a 'tag peptide', a short internal open reading frame. During trans-translation Ala-aminoacylated tmRNA acts like a tRNA, entering the A-site of stalled ribosomes, displacing the stalled mRNA. The ribosome then switches to translate the ORF on the tmRNA; the nascent peptide is terminated with the 'tag peptide' encoded by the tmRNA and targeted for degradation. The ribosome is freed to recommence translation, which seems to be the essential function of trans-translation. This chain is SsrA-binding protein, found in Leuconostoc mesenteroides subsp. mesenteroides (strain ATCC 8293 / DSM 20343 / BCRC 11652 / CCM 1803 / JCM 6124 / NCDO 523 / NBRC 100496 / NCIMB 8023 / NCTC 12954 / NRRL B-1118 / 37Y).